The following is an 848-amino-acid chain: Heat shock protein 70 homolog lhs1 (848 aa).

Positions 1-21 (MKRSVLTIILFFSCQFWHAFA) are cleaved as a signal peptide. N-linked (GlcNAc...) asparagine glycans are attached at residues N134, N247, N359, N457, N462, N488, N555, N632, N678, N733, and N817. The tract at residues 784–848 (KLKAKKGASS…QQEIDDSDEL (65 aa)) is disordered. 2 stretches are compositionally biased toward polar residues: residues 807-822 (TNDI…TSTQ) and 829-840 (ASVTQRPSSLQQ). A Prevents secretion from ER motif is present at residues 845-848 (SDEL).

This sequence belongs to the heat shock protein 70 family.

It is found in the endoplasmic reticulum lumen. It catalyses the reaction ATP + H2O = ADP + phosphate + H(+). Chaperone required for protein translocation and folding in the endoplasmic reticulum. The protein is Heat shock protein 70 homolog lhs1 of Schizosaccharomyces pombe (strain 972 / ATCC 24843) (Fission yeast).